We begin with the raw amino-acid sequence, 202 residues long: FMN-dependent NADH:quinone oxidoreductase 2 (202 aa).

FMN is bound by residues Ser9, 15-17, 95-98, and 139-142; these read SAS, MYNF, and TAGG.

The protein belongs to the azoreductase type 1 family. As to quaternary structure, homodimer. The cofactor is FMN.

The enzyme catalyses 2 a quinone + NADH + H(+) = 2 a 1,4-benzosemiquinone + NAD(+). It carries out the reaction N,N-dimethyl-1,4-phenylenediamine + anthranilate + 2 NAD(+) = 2-(4-dimethylaminophenyl)diazenylbenzoate + 2 NADH + 2 H(+). Functionally, quinone reductase that provides resistance to thiol-specific stress caused by electrophilic quinones. Reduces both benzoquinones and naphthoquinones efficiently. Its function is as follows. Also exhibits azoreductase activity. Catalyzes the reductive cleavage of the azo bond in aromatic azo compounds to the corresponding amines. Preferred substrates are the large bis-azo dye Ponceau BS, amaranth and tropaeolin O. The polypeptide is FMN-dependent NADH:quinone oxidoreductase 2 (Pseudomonas aeruginosa (strain ATCC 15692 / DSM 22644 / CIP 104116 / JCM 14847 / LMG 12228 / 1C / PRS 101 / PAO1)).